A 203-amino-acid polypeptide reads, in one-letter code: DNA-directed RNA polymerase subunit gamma (203 aa).

Residues C34, C36, C49, and C52 each coordinate Zn(2+).

It belongs to the RNA polymerase beta' chain family. RpoC1 subfamily. As to quaternary structure, in cyanobacteria the RNAP catalytic core is composed of 2 alpha, 1 beta, 1 beta', 1 gamma and 1 omega subunit. When a sigma factor is associated with the core the holoenzyme is formed, which can initiate transcription. It depends on Zn(2+) as a cofactor.

The enzyme catalyses RNA(n) + a ribonucleoside 5'-triphosphate = RNA(n+1) + diphosphate. DNA-dependent RNA polymerase catalyzes the transcription of DNA into RNA using the four ribonucleoside triphosphates as substrates. This is DNA-directed RNA polymerase subunit gamma (rpoC1) from Prochloron sp.